A 464-amino-acid chain; its full sequence is UPF0210 protein Cgl1545/cg1743 (464 aa).

Belongs to the UPF0210 family. In terms of assembly, homodimer.

The sequence is that of UPF0210 protein Cgl1545/cg1743 from Corynebacterium glutamicum (strain ATCC 13032 / DSM 20300 / JCM 1318 / BCRC 11384 / CCUG 27702 / LMG 3730 / NBRC 12168 / NCIMB 10025 / NRRL B-2784 / 534).